Reading from the N-terminus, the 286-residue chain is Probable protein S-acyltransferase 16 (286 aa).

The next 2 membrane-spanning stretches (helical) occupy residues P11–I31 and N45–F65. Positions R97 to V147 constitute a DHHC domain. The S-palmitoyl cysteine intermediate role is filled by C127. A run of 2 helical transmembrane segments spans residues V141–V161 and I182–G202.

It belongs to the DHHC palmitoyltransferase family.

It localises to the golgi apparatus membrane. It catalyses the reaction L-cysteinyl-[protein] + hexadecanoyl-CoA = S-hexadecanoyl-L-cysteinyl-[protein] + CoA. Its function is as follows. Palmitoyl acyltransferase. The sequence is that of Probable protein S-acyltransferase 16 (PAT16) from Arabidopsis thaliana (Mouse-ear cress).